A 254-amino-acid polypeptide reads, in one-letter code: Phosphonates import ATP-binding protein PhnC 2 (254 aa).

An ABC transporter domain is found at 4 to 248 (LEVNNLGKHY…KIESIYGFQQ (245 aa)). Residue 37-44 (GPSGAGKS) participates in ATP binding.

This sequence belongs to the ABC transporter superfamily. Phosphonates importer (TC 3.A.1.9.1) family. The complex is composed of two ATP-binding proteins (PhnC), two transmembrane proteins (PhnE) and a solute-binding protein (PhnD).

It localises to the cell membrane. It carries out the reaction phosphonate(out) + ATP + H2O = phosphonate(in) + ADP + phosphate + H(+). In terms of biological role, part of the ABC transporter complex PhnCDE involved in phosphonates import. Responsible for energy coupling to the transport system. The polypeptide is Phosphonates import ATP-binding protein PhnC 2 (Oceanobacillus iheyensis (strain DSM 14371 / CIP 107618 / JCM 11309 / KCTC 3954 / HTE831)).